Here is a 291-residue protein sequence, read N- to C-terminus: Putative heme-binding peroxidase (291 aa).

Histidine 61 acts as the Proton acceptor in catalysis. Residue histidine 185 participates in heme b binding. Tryptophan 201 serves as the catalytic Tryptophan radical intermediate.

This sequence belongs to the peroxidase family. Cytochrome c peroxidase subfamily. It depends on heme b as a cofactor.

Destroys radicals which are normally produced within the cells and which are toxic to biological systems. The sequence is that of Putative heme-binding peroxidase (CCP2) from Candida albicans (strain SC5314 / ATCC MYA-2876) (Yeast).